The following is a 341-amino-acid chain: Transcription factor ETV7 (341 aa).

The PNT domain maps to 33–117 (NLLGEGGICK…ELLQYIKTQR (85 aa)). The ETS DNA-binding region spans 224–305 (RLLWDYVYQL…PGQKLLFRFL (82 aa)). Residues 315–341 (KHSHLEPLESQEQDRIEFKDKRPEISP) are disordered.

It belongs to the ETS family. In terms of tissue distribution, expressed in hematopoietic tissues.

It localises to the nucleus. In terms of biological role, transcriptional repressor; binds to the DNA sequence 5'-CCGGAAGT-3'. Isoform A does not seem to have a repressor activity. Isoform C does not seem to have a repressor activity. In Homo sapiens (Human), this protein is Transcription factor ETV7 (ETV7).